Here is a 1021-residue protein sequence, read N- to C-terminus: Ribosome quality control complex subunit 2 (1021 aa).

A coiled-coil region spans residues 348–388; sequence IEAQKLKKRAHDRLATAERRLESAKEDQARKLQSLQDAQAT. The tract at residues 457 to 484 is disordered; that stretch reads NPESVDNSDESSETSDDDLDDSDDDNKV. Residues 462–480 are compositionally biased toward acidic residues; that stretch reads DNSDESSETSDDDLDDSDD. Phosphoserine is present on Ser-478. Coiled-coil stretches lie at residues 507–546 and 698–727; these read NARK…DLKR and DEKS…LKME. 2 stretches are compositionally biased toward polar residues: residues 746–761 and 839–856; these read YNED…TTGS and ISSQ…TPTA. Disordered regions lie at residues 746-801 and 832-905; these read YNED…TALE and HAAR…VESF. Over residues 876–905 the composition is skewed to basic and acidic residues; the sequence is DQSRNSEAENEKGLSTEQRDEKKHAKVESF.

This sequence belongs to the NEMF family. In terms of assembly, component of the ribosome quality control complex (RQC), composed of the E3 ubiquitin ligase rkr1/ltn1, rqc1 and mtr1/rqc2, as well as cdc48 and its ubiquitin-binding cofactors associated with the 60S ribosomal subunit. RQC2 binds to the 40S-binding surface of tRNAs.

It localises to the cytoplasm. Key component of the ribosome quality control complex (RQC), a ribosome-associated complex that mediates the extraction of incompletely synthesized nascent chains from stalled ribosomes as well as their ubiquitin-mediated proteasomal degradation. Thereby, frees 60S subunit ribosomes from the stalled translation complex and prevents the accumulation of nascent polypeptide chains that are potentially toxic for the cell. Within the RQC complex, mtr1/rqc2 specifically binds stalled 60S ribosomal subunits by recognizing an exposed, nascent chain-conjugated tRNA moiety and promotes the recruitment of rkr1/ltn1 to stalled 60S subunits. Following binding to stalled 60S ribosomal subunits, mtr1/rqc2 mediates CAT tailing by recruiting alanine- and threonine-charged tRNA to the A-site and directing the elongation of stalled nascent chains independently of mRNA or 40S subunits, leading to non-templated C-terminal Ala and Thr extensions (CAT tails). CAT tails promote the rkr1/ltn1-mediated ubiquitination of incompletely synthesized nascent polypeptides: CAT tailing facilitates rkr1/ltn1-dependent ubiquitination by exposing lysine residues that would otherwise remain buried in the ribosomal exit tunnel. Following ubiquitination, incompletely synthesized nascent polypeptides are recognized by CDC48 and degraded by the proteasome. CAT-tailed proteins tend to aggregate and sequester chaperones and can induce proteotoxic stress; their rkr1/ltn1-dependent ubiquitination and degradation is required to prevent proteotoxic stress. This is Ribosome quality control complex subunit 2 from Schizosaccharomyces pombe (strain 972 / ATCC 24843) (Fission yeast).